We begin with the raw amino-acid sequence, 162 residues long: UPF0178 protein RSKD131_2223 (162 aa).

It belongs to the UPF0178 family.

This chain is UPF0178 protein RSKD131_2223, found in Cereibacter sphaeroides (strain KD131 / KCTC 12085) (Rhodobacter sphaeroides).